A 207-amino-acid chain; its full sequence is MMHQIYSCSDENIEVFTTVIPSKVSSPARRRAKSSQHLLTKNVVIESDLYTHQPLELLPHRGDRRDPGDRRRFGRLQTARPPTAHPAKASARPVGISEPKTSNLCGNRAYGKSLIPPVPRISVKTSASASLEATAMGTEKGAVLMRGSRHLKKMTEEYPALPQGAEASLPLTGSASCGVPGILRKMWTRHKKKSEYVGATNSAFEAD.

A disordered region spans residues glutamate 56–lysine 100. Residues leucine 58 to arginine 71 show a composition bias toward basic and acidic residues.

It belongs to the vexin family.

The protein localises to the cell membrane. It is found in the nucleus. In terms of biological role, required for neurogenesis in the neural plate and retina. Strongly cooperates with neural bHLH factors to promote neurogenesis. The sequence is that of Vexin from Homo sapiens (Human).